We begin with the raw amino-acid sequence, 315 residues long: Voltage-dependent calcium channel gamma-3 subunit (315 aa).

Transmembrane regions (helical) follow at residues 8–28 (IQML…TIAV), 104–124 (SSVF…CVAA), 135–155 (ILSA…GIIV), and 181–201 (FGAF…HIYI). S248 bears the Phosphoserine mark.

The protein belongs to the PMP-22/EMP/MP20 family. CACNG subfamily. The L-type calcium channel is composed of five subunits: alpha-1, alpha-2/delta, beta and gamma. Acts as an auxiliary subunit for AMPA-selective glutamate receptors (AMPARs). Found in a complex with GRIA1, GRIA2, GRIA3, GRIA4, CNIH2, CNIH3, CACNG2, CACNG4, CACNG5, CACNG7 and CACNG8. Interacts with AP4M1 and GRIA1; associates GRIA1 with the adaptor protein complex 4 (AP-4) to target GRIA1 to the somatodendritic compartment of neurons.

The protein localises to the membrane. Functionally, regulates the trafficking to the somatodendritic compartment and gating properties of AMPA-selective glutamate receptors (AMPARs). Promotes their targeting to the cell membrane and synapses and modulates their gating properties by slowing their rates of activation, deactivation and desensitization. Does not show subunit-specific AMPA receptor regulation and regulates all AMPAR subunits. Thought to stabilize the calcium channel in an inactivated (closed) state. This Homo sapiens (Human) protein is Voltage-dependent calcium channel gamma-3 subunit (CACNG3).